The primary structure comprises 38 residues: Large ribosomal subunit protein bL36 (38 aa).

The protein belongs to the bacterial ribosomal protein bL36 family.

This is Large ribosomal subunit protein bL36 from Polynucleobacter necessarius subsp. necessarius (strain STIR1).